Consider the following 320-residue polypeptide: Transcription factor bHLH34 (320 aa).

The bHLH domain maps to 162-213; it reads SKPGTKACREKLRREKLNDKFMDLSSVLEPGRTPKTDKSAILDDAIRVVNQL. Residues 299-320 form a disordered region; that stretch reads WSPLPPADRDTSRDLKNLPPVA. The span at 305-314 shows a compositional bias: basic and acidic residues; that stretch reads ADRDTSRDLK.

Homodimer. Expressed constitutively in roots, leaves, stems, and flowers.

Its subcellular location is the nucleus. The sequence is that of Transcription factor bHLH34 (BHLH34) from Arabidopsis thaliana (Mouse-ear cress).